The following is a 522-amino-acid chain: MASGGGGCSASERLPPPFPGMDPESEGAAGGSEPEAGDSDTEGEDIFTGAAAASKPQSPKKTTSLFPIKNGSKENGIHEEQDQEPQDLFADATVELSLDSTQNNQKTMPGKTLIPHPTQEATNSPKPQPSYEELEEEEQEDQFDLTVGITDPEKIGDGMNAYVAYKVTTQTSLPMFRSRQFAVKRRFSDFLGLYEKLSEKHSQNGFIVPPPPEKSLIGMTKVKVGKEDSSSAEFLEKRRAALERYLQRIVNHPTMLQDPDVREFLEKEELPRAVGTQALSGAGLLKMFNKATDAVSKMTIKMNESDIWFEEKLQEVECEEQRLRKLHAVVETLVNHRKELALNTALFAKSLAMLGSSEDNTALSRALSQLAEVEEKIEQLHQEQANNDFFLLAELLSDYIRLLAIVRAAFDQRMKTWQRWQDAQATLQKKRESEARLLWANKPDKLQQAKDEITEWESRVTQYERDFERISTVVRKEVTRFEKEKSKDFKNHVIKYLETLLHSQQQLAKYWEAFLPEARAIS.

Residues 1 to 142 (MASGGGGCSA…ELEEEEQEDQ (142 aa)) form a disordered region. 2 positions are modified to phosphoserine: Ser32 and Ser39. The span at 35–45 (EAGDSDTEGED) shows a compositional bias: acidic residues. A phosphothreonine mark is found at Thr41 and Thr48. Positions 55 to 65 (KPQSPKKTTSL) are enriched in polar residues. Ser58 and Ser72 each carry phosphoserine. The segment covering 71 to 80 (GSKENGIHEE) has biased composition (basic and acidic residues). Residues 98-107 (LDSTQNNQKT) show a composition bias toward polar residues. The span at 132-142 (EELEEEEQEDQ) shows a compositional bias: acidic residues. The 130-residue stretch at 143–272 (FDLTVGITDP…EFLEKEELPR (130 aa)) folds into the PX domain. Arg186, Ser188, and Lys214 together coordinate a 1,2-diacyl-sn-glycero-3-phospho-(1D-myo-inositol-3-phosphate). Ser188 carries the phosphoserine modification. N6-acetyllysine is present on Lys237. Arg238 lines the a 1,2-diacyl-sn-glycero-3-phospho-(1D-myo-inositol-3-phosphate) pocket. Ser280 bears the Phosphoserine mark. The segment at 281–298 (GAGLLKMFNKATDAVSKM) is membrane-binding amphipathic helix. In terms of domain architecture, BAR spans 302-522 (MNESDIWFEE…AFLPEARAIS (221 aa)).

The protein belongs to the sorting nexin family. In terms of assembly, predominantly forms heterodimers with BAR domain-containing sorting nexins SNX5, SNX6 and SNX32; can self-associate to form homodimers. The heterodimers are proposed to self-assemble into helical arrays on the membrane to stabilize and expand local membrane curvature underlying endosomal tubule formation. Thought to be a component of the originally described retromer complex (also called SNX-BAR retromer) which is a pentamer containing the heterotrimeric retromer cargo-selective complex (CSC), also described as vacuolar protein sorting subcomplex (VPS) and a heterodimeric membrane-deforming subcomplex formed between SNX1 or SNX2 and SNX5 or SNX6 (also called SNX-BAR subcomplex); the respective CSC and SNX-BAR subcomplexes associate with low affinity. Interacts with SNX5, SNX6, SNX32, VPS26A, VPS29, VPS35, DRD5, DENND5A, KALRN, RHOG (GDP-bound form). The interaction with SNX2 is reported controversially. Interacts with DNAJC13; prevented by presence of HGS. Interacts with HGS.

It localises to the endosome membrane. The protein localises to the golgi apparatus. The protein resides in the trans-Golgi network membrane. Its subcellular location is the early endosome membrane. It is found in the cell projection. It localises to the lamellipodium. In terms of biological role, involved in several stages of intracellular trafficking. Interacts with membranes containing phosphatidylinositol 3-phosphate (PtdIns(3P)) or phosphatidylinositol 3,5-bisphosphate (PtdIns(3,5)P2). Acts in part as component of the retromer membrane-deforming SNX-BAR subcomplex. The SNX-BAR retromer mediates retrograde transport of cargo proteins from endosomes to the trans-Golgi network (TGN) and is involved in endosome-to-plasma membrane transport for cargo protein recycling. The SNX-BAR subcomplex functions to deform the donor membrane into a tubular profile called endosome-to-TGN transport carrier (ETC). Can sense membrane curvature and has in vitro vesicle-to-membrane remodeling activity. Involved in retrograde endosome-to-TGN transport of lysosomal enzyme receptors (IGF2R, M6PR and SORT1). Plays a role in targeting ligand-activated EGFR to the lysosomes for degradation after endocytosis from the cell surface and release from the Golgi. Involvement in retromer-independent endocytic trafficking of P2RY1 and lysosomal degradation of protease-activated receptor-1/F2R. Promotes KALRN- and RHOG-dependent but retromer-independent membrane remodeling such as lamellipodium formation; the function is dependent on GEF activity of KALRN. Required for endocytosis of DRD5 upon agonist stimulation but not for basal receptor trafficking. This Rattus norvegicus (Rat) protein is Sorting nexin-1 (Snx1).